A 538-amino-acid polypeptide reads, in one-letter code: Cytochrome P450 734A4 (538 aa).

The chain crosses the membrane as a helical span at residues 5–27 (VAVAAAVLLLLHVAARVADAVWW). Residue cysteine 480 coordinates heme.

It belongs to the cytochrome P450 family. The cofactor is heme. Expressed in roots, shoot apex, leaf sheaths, leaf blades, internodes and panicles.

The protein resides in the membrane. In terms of biological role, cytochrome P450 involved in brassinosteroids (BRs) inactivation and regulation of BRs homeostasis. Is a multifunctional and multisubstrate enzyme that controls the endogenous bioactive BR content both by direct inactivation of castasterone (CS) and by decreasing the levels of BR precursors. Catalyzes the oxidation of carbon 22 hydroxylated BR intermediates to produce C26 oxidized metabolites. This chain is Cytochrome P450 734A4 (CYP734A4), found in Oryza sativa subsp. japonica (Rice).